A 165-amino-acid chain; its full sequence is Crossover junction endodeoxyribonuclease RuvC (165 aa).

Active-site residues include Asp7, Glu67, and Asp140. Residues Asp7, Glu67, and Asp140 each coordinate Mg(2+).

It belongs to the RuvC family. As to quaternary structure, homodimer which binds Holliday junction (HJ) DNA. The HJ becomes 2-fold symmetrical on binding to RuvC with unstacked arms; it has a different conformation from HJ DNA in complex with RuvA. In the full resolvosome a probable DNA-RuvA(4)-RuvB(12)-RuvC(2) complex forms which resolves the HJ. Mg(2+) is required as a cofactor.

It is found in the cytoplasm. It carries out the reaction Endonucleolytic cleavage at a junction such as a reciprocal single-stranded crossover between two homologous DNA duplexes (Holliday junction).. Functionally, the RuvA-RuvB-RuvC complex processes Holliday junction (HJ) DNA during genetic recombination and DNA repair. Endonuclease that resolves HJ intermediates. Cleaves cruciform DNA by making single-stranded nicks across the HJ at symmetrical positions within the homologous arms, yielding a 5'-phosphate and a 3'-hydroxyl group; requires a central core of homology in the junction. The consensus cleavage sequence is 5'-(A/T)TT(C/G)-3'. Cleavage occurs on the 3'-side of the TT dinucleotide at the point of strand exchange. HJ branch migration catalyzed by RuvA-RuvB allows RuvC to scan DNA until it finds its consensus sequence, where it cleaves and resolves the cruciform DNA. The polypeptide is Crossover junction endodeoxyribonuclease RuvC (Dehalococcoides mccartyi (strain ATCC BAA-2266 / KCTC 15142 / 195) (Dehalococcoides ethenogenes (strain 195))).